Here is a 415-residue protein sequence, read N- to C-terminus: 4-hydroxy-3-methylbut-2-en-1-yl diphosphate synthase (flavodoxin) (415 aa).

[4Fe-4S] cluster is bound by residues Cys298, Cys301, Cys344, and Glu351.

It belongs to the IspG family. The cofactor is [4Fe-4S] cluster.

The catalysed reaction is (2E)-4-hydroxy-3-methylbut-2-enyl diphosphate + oxidized [flavodoxin] + H2O + 2 H(+) = 2-C-methyl-D-erythritol 2,4-cyclic diphosphate + reduced [flavodoxin]. It participates in isoprenoid biosynthesis; isopentenyl diphosphate biosynthesis via DXP pathway; isopentenyl diphosphate from 1-deoxy-D-xylulose 5-phosphate: step 5/6. Its function is as follows. Converts 2C-methyl-D-erythritol 2,4-cyclodiphosphate (ME-2,4cPP) into 1-hydroxy-2-methyl-2-(E)-butenyl 4-diphosphate. The chain is 4-hydroxy-3-methylbut-2-en-1-yl diphosphate synthase (flavodoxin) from Solibacter usitatus (strain Ellin6076).